Consider the following 184-residue polypeptide: uncharacterized protein (184 aa).

The tract at residues 32-52 (PCPRSRTQGQSRRSETHTISR) is disordered.

Its subcellular location is the mitochondrion. This is an uncharacterized protein from Arabidopsis thaliana (Mouse-ear cress).